We begin with the raw amino-acid sequence, 256 residues long: Small ribosomal subunit protein uS2 (256 aa).

This sequence belongs to the universal ribosomal protein uS2 family.

The sequence is that of Small ribosomal subunit protein uS2 from Streptococcus agalactiae serotype III (strain NEM316).